Here is a 264-residue protein sequence, read N- to C-terminus: MGQTALARGSSSTPSSHALYSDLSPPEGLEELLSAPPPDLGAQRHHGWNPKDCSENIDVKEGGLCFERRPVAQSTDGVRGKRGYSRGLHAWEISWPLEQRGTHAVVGVATALAPLQADHYAALLGSNSESWGWDIGRGKLYHQSKGLEAPQYPAGPQGEQLVVPERLLVVLDMEEGTLGYSIGGTYLGPAFRGLKGRTLYPSVSAVWGQCQVRIRYLGERRAEEPQSLLHLSRLCVRHALGDTRLGQISSLPLPPAMKRYLLYK.

The segment covering 1 to 18 (MGQTALARGSSSTPSSHA) has biased composition (polar residues). A disordered region spans residues 1–53 (MGQTALARGSSSTPSSHALYSDLSPPEGLEELLSAPPPDLGAQRHHGWNPKDC). Residues 21-34 (SDLSPPEGLEELLS) show a composition bias toward low complexity. The B30.2/SPRY domain occupies 26–221 (PEGLEELLSA…VRIRYLGERR (196 aa)). The SOCS box domain occupies 222–264 (AEEPQSLLHLSRLCVRHALGDTRLGQISSLPLPPAMKRYLLYK).

It belongs to the SPSB family. In terms of assembly, component of the probable ECS(SPSB2) E3 ubiquitin-protein ligase complex which contains CUL5, RNF7/RBX2, Elongin BC complex and SPSB2. Interacts with CUL5, RNF7, ELOB and ELOC. Interacts with MET. Interacts (via B30.2/SPRY domain) with PAWR; this interaction occurs in association with the Elongin BC complex. Interacts with NOS2.

Its subcellular location is the cytoplasm. The protein localises to the cytosol. It functions in the pathway protein modification; protein ubiquitination. Its function is as follows. Substrate recognition component of a SCF-like ECS (Elongin BC-CUL2/5-SOCS-box protein) E3 ubiquitin-protein ligase complex which mediates the ubiquitination and subsequent proteasomal degradation of target proteins. Negatively regulates nitric oxide (NO) production and limits cellular toxicity in activated macrophages by mediating the ubiquitination and proteasomal degradation of NOS2. Acts as a bridge which links NOS2 with the ECS E3 ubiquitin ligase complex components ELOC and CUL5. The chain is SPRY domain-containing SOCS box protein 2 (Spsb2) from Rattus norvegicus (Rat).